Here is a 240-residue protein sequence, read N- to C-terminus: Large ribosomal subunit protein bL25 (240 aa).

Disordered stretches follow at residues 1 to 21 (MAEN…PARR) and 204 to 240 (GAAP…KAKK). Low complexity predominate over residues 204-229 (GAAPAAGAAAPAGGAAPAAGAAPAKG). Residues 230–240 (GEAKGGDKAKK) show a composition bias toward basic and acidic residues.

It belongs to the bacterial ribosomal protein bL25 family. CTC subfamily. As to quaternary structure, part of the 50S ribosomal subunit; part of the 5S rRNA/L5/L18/L25 subcomplex. Contacts the 5S rRNA. Binds to the 5S rRNA independently of L5 and L18.

In terms of biological role, this is one of the proteins that binds to the 5S RNA in the ribosome where it forms part of the central protuberance. The chain is Large ribosomal subunit protein bL25 from Anaeromyxobacter dehalogenans (strain 2CP-1 / ATCC BAA-258).